The sequence spans 61 residues: MAKKSMIAKANRPAKFSSRAYTRCKICGRPHSVYRDFGICRVCLRKLANEGLIPGLKKASW.

Zn(2+)-binding residues include C24, C27, C40, and C43.

Belongs to the universal ribosomal protein uS14 family. Zinc-binding uS14 subfamily. In terms of assembly, part of the 30S ribosomal subunit. Contacts proteins S3 and S10. Requires Zn(2+) as cofactor.

Its function is as follows. Binds 16S rRNA, required for the assembly of 30S particles and may also be responsible for determining the conformation of the 16S rRNA at the A site. The protein is Small ribosomal subunit protein uS14 of Campylobacter hominis (strain ATCC BAA-381 / DSM 21671 / CCUG 45161 / LMG 19568 / NCTC 13146 / CH001A).